The chain runs to 220 residues: Iron-sulfur cluster repair protein YtfE (220 aa).

The protein belongs to the RIC family. YtfE subfamily. In terms of assembly, homodimer.

The protein localises to the cytoplasm. Its function is as follows. Di-iron-containing protein involved in the repair of iron-sulfur clusters damaged by oxidative and nitrosative stress conditions. The sequence is that of Iron-sulfur cluster repair protein YtfE from Salmonella typhimurium (strain LT2 / SGSC1412 / ATCC 700720).